Consider the following 664-residue polypeptide: DNA mismatch repair protein MutL (664 aa).

The interval 382–447 (RKAGQEQQLQ…YGEPAPSKQQ (66 aa)) is disordered. Polar residues predominate over residues 427–436 (RHTTSSNQSE).

Belongs to the DNA mismatch repair MutL/HexB family.

Its function is as follows. This protein is involved in the repair of mismatches in DNA. It is required for dam-dependent methyl-directed DNA mismatch repair. May act as a 'molecular matchmaker', a protein that promotes the formation of a stable complex between two or more DNA-binding proteins in an ATP-dependent manner without itself being part of a final effector complex. The sequence is that of DNA mismatch repair protein MutL from Vibrio vulnificus (strain YJ016).